Consider the following 429-residue polypeptide: S-adenosylmethionine synthase (429 aa).

H14 contacts ATP. Residue D16 coordinates Mg(2+). A K(+)-binding site is contributed by E42. 2 residues coordinate L-methionine: E55 and Q98. The segment at 98–108 (QSADINRGVDR) is flexible loop. ATP is bound by residues 165-167 (DAK), 252-253 (KF), D261, 267-268 (RK), A284, and K288. Residue D261 coordinates L-methionine. Position 292 (K292) interacts with L-methionine.

This sequence belongs to the AdoMet synthase family. In terms of assembly, homotetramer; dimer of dimers. Mg(2+) is required as a cofactor. Requires K(+) as cofactor.

It localises to the cytoplasm. The enzyme catalyses L-methionine + ATP + H2O = S-adenosyl-L-methionine + phosphate + diphosphate. The protein operates within amino-acid biosynthesis; S-adenosyl-L-methionine biosynthesis; S-adenosyl-L-methionine from L-methionine: step 1/1. Its function is as follows. Catalyzes the formation of S-adenosylmethionine (AdoMet) from methionine and ATP. The overall synthetic reaction is composed of two sequential steps, AdoMet formation and the subsequent tripolyphosphate hydrolysis which occurs prior to release of AdoMet from the enzyme. This Porphyromonas gingivalis (strain ATCC 33277 / DSM 20709 / CIP 103683 / JCM 12257 / NCTC 11834 / 2561) protein is S-adenosylmethionine synthase.